The primary structure comprises 400 residues: Outer membrane protein alpha (400 aa).

A signal peptide spans 1–20 (MKRVLLTVAMLSVFFSAMFA). Residues 21-81 (FFPDVPKDHW…DFIEQKMLAG (61 aa)) enclose the SLH domain. Residues 85–379 (DLAQVVGNLS…ESVKAYNRNL (295 aa)) are a coiled coil. 3 tandem repeats follow at residues 208 to 232 (VNLH…LNNK), 251 to 275 (VELH…LNKK), and 326 to 350 (VDLH…LNMK). Residues 208–350 (VNLHEKDIIN…SSLEEDLNMK (143 aa)) form a 3 X 25 AA approximate repeat region. Residues 380 to 400 (SILTGAFFGILGLILIAISGK) form a helical membrane-spanning segment.

As to quaternary structure, homotetramer.

It is found in the cell outer membrane. Functionally, links the outer membrane to the inner membrane. Long fibrous protein that could serve to separate the two membranes. In Thermotoga maritima (strain ATCC 43589 / DSM 3109 / JCM 10099 / NBRC 100826 / MSB8), this protein is Outer membrane protein alpha (omp-alpha).